The sequence spans 300 residues: Protoheme IX farnesyltransferase (300 aa).

Transmembrane regions (helical) follow at residues 24–44 (VTQLAVFCAVIGMFLATPGMV), 48–68 (VLLGGTVGIGLLAGSAFAINC), 94–114 (LQILAFSTVLGGLGAWTLYTF), 118–138 (LTMWLTIATFVGYAVIYTLLL), 146–166 (IVIGGASGAMPPALGWAAVTG), 172–192 (AWILVLIIFVWTPPHFWVLAL), 217–237 (LHILLYTVILFAVTMMPFISG), 239–259 (SGAVYLTSAVLLGAIFLAYAW), and 278–298 (IVYLSLLFAALLVDHYARPVI).

Belongs to the UbiA prenyltransferase family. Protoheme IX farnesyltransferase subfamily.

The protein localises to the cell inner membrane. The enzyme catalyses heme b + (2E,6E)-farnesyl diphosphate + H2O = Fe(II)-heme o + diphosphate. It participates in porphyrin-containing compound metabolism; heme O biosynthesis; heme O from protoheme: step 1/1. Converts heme B (protoheme IX) to heme O by substitution of the vinyl group on carbon 2 of heme B porphyrin ring with a hydroxyethyl farnesyl side group. This chain is Protoheme IX farnesyltransferase, found in Burkholderia thailandensis (strain ATCC 700388 / DSM 13276 / CCUG 48851 / CIP 106301 / E264).